We begin with the raw amino-acid sequence, 169 residues long: 3-hydroxyanthranilate 3,4-dioxygenase (169 aa).

An O2-binding site is contributed by Arg-44. Residues His-48, Glu-54, and His-92 each coordinate Fe cation. Residue Glu-54 participates in substrate binding. Residues Arg-96 and Glu-106 each coordinate substrate. A divalent metal cation is bound by residues Cys-121, Cys-124, Cys-158, and Cys-160.

Belongs to the 3-HAO family. It depends on Fe(2+) as a cofactor.

The protein localises to the cytoplasm. The catalysed reaction is 3-hydroxyanthranilate + O2 = (2Z,4Z)-2-amino-3-carboxymuconate 6-semialdehyde. It participates in cofactor biosynthesis; NAD(+) biosynthesis; quinolinate from L-kynurenine: step 3/3. In terms of biological role, catalyzes the oxidative ring opening of 3-hydroxyanthranilate to 2-amino-3-carboxymuconate semialdehyde, which spontaneously cyclizes to quinolinate. In Meyerozyma guilliermondii (strain ATCC 6260 / CBS 566 / DSM 6381 / JCM 1539 / NBRC 10279 / NRRL Y-324) (Yeast), this protein is 3-hydroxyanthranilate 3,4-dioxygenase.